Reading from the N-terminus, the 208-residue chain is 2-phospho-L-lactate guanylyltransferase (208 aa).

Belongs to the CofC family. As to quaternary structure, homodimer.

The catalysed reaction is (2S)-2-phospholactate + GTP + H(+) = (2S)-lactyl-2-diphospho-5'-guanosine + diphosphate. It functions in the pathway cofactor biosynthesis; coenzyme F420 biosynthesis. Functionally, guanylyltransferase that catalyzes the activation of (2S)-2-phospholactate (2-PL) as (2S)-lactyl-2-diphospho-5'-guanosine, via the condensation of 2-PL with GTP. It is involved in the biosynthesis of coenzyme F420, a hydride carrier cofactor. The sequence is that of 2-phospho-L-lactate guanylyltransferase from Methanosarcina barkeri (strain Fusaro / DSM 804).